Reading from the N-terminus, the 412-residue chain is Phosphoglycerate kinase (412 aa).

Substrate contacts are provided by residues 22-24 (DFN), R37, 60-63 (HLGK), R120, and R172. ATP-binding positions include K223, G310, E341, and 368–371 (GGDS).

It belongs to the phosphoglycerate kinase family. As to quaternary structure, monomer.

Its subcellular location is the cytoplasm. It catalyses the reaction (2R)-3-phosphoglycerate + ATP = (2R)-3-phospho-glyceroyl phosphate + ADP. It functions in the pathway carbohydrate degradation; glycolysis; pyruvate from D-glyceraldehyde 3-phosphate: step 2/5. This chain is Phosphoglycerate kinase, found in Spiroplasma citri.